Reading from the N-terminus, the 955-residue chain is Reversion-inducing cysteine-rich protein with Kazal motifs (955 aa).

The signal sequence occupies residues 1–22; it reads MSGCLQILTVLLCCRFWALVFS. The stretch at 28–75 is one Knot 1 repeat; it reads CVHHAADIPRCRDACEQLASIRSESRLRHLLHRLPSYCPETLSELWIC. The tract at residues 28–326 is 5 X Knot repeats; sequence CVHHAADIPR…NPVEMDLITC (299 aa). Asparagine 77 carries N-linked (GlcNAc...) asparagine glycosylation. 2 Knot repeats span residues 95 to 132 and 142 to 188; these read CCEL…LYSC and CCSY…LILC. N-linked (GlcNAc...) asparagine glycosylation occurs at asparagine 191. 2 Knot repeats span residues 207–254 and 282–326; these read CCDR…LWQC and CCFK…LITC. Residues asparagine 287 and asparagine 375 are each glycosylated (N-linked (GlcNAc...) asparagine). 3 consecutive Kazal-like domains span residues 615–661, 686–741, and 742–778; these read LFTG…SCRS, DLSE…HCQD, and ACRR…RCHA. 5 cysteine pairs are disulfide-bonded: cysteine 621–cysteine 646, cysteine 623–cysteine 642, cysteine 631–cysteine 659, cysteine 704–cysteine 724, and cysteine 713–cysteine 739. Serine 931 carries the GPI-anchor amidated serine lipid modification. Residues 932 to 955 constitute a propeptide that is removed on maturation; it reads SCVSISVCVLLLLCSLILTLTSDL.

It belongs to the RECK family. As to quaternary structure, interacts (via knot repeats) with wnt7a (via disordered linker region); the interaction is direct. Interacts (via knot repeats) with wnt7b (via disordered linker region); the interaction is direct. Interacts with adgra2; the interaction is direct. In terms of tissue distribution, expressed in the cerebral endothelium.

It localises to the cell membrane. Functionally, functions together with adgra2 to enable brain endothelial cells to selectively respond to Wnt7 signals (wnt7a or wnt7b). Plays a key role in Wnt7-specific responses: required for central nervous system (CNS) angiogenesis and blood-brain barrier regulation. Acts as a Wnt7-specific coactivator of canonical Wnt signaling by decoding Wnt ligands: acts by interacting specifically with the disordered linker region of Wnt7, thereby conferring ligand selectivity for Wnt7. Adgra2 is then required to deliver reck-bound Wnt7 to frizzled by assembling a higher-order RECK-ADGRA2-Fzd-LRP5-LRP6 complex. Also acts as a serine protease inhibitor. The protein is Reversion-inducing cysteine-rich protein with Kazal motifs of Danio rerio (Zebrafish).